The sequence spans 172 residues: Cold-inducible RNA-binding protein (172 aa).

Residues Gly-6–Lys-84 enclose the RRM domain. Residues Lys-70 to Glu-172 are disordered. 2 stretches are compositionally biased toward gly residues: residues Tyr-93–Arg-105 and Phe-114–Gly-137. A phosphoserine mark is found at Ser-130, Ser-138, Ser-146, Ser-156, Ser-159, and Ser-163. Low complexity predominate over residues Ser-138–Glu-172.

As to quaternary structure, interacts with EIF4G1. Associates with ribosomes. In terms of processing, methylated on arginine residues. Methylation of the RGG motifs is a prerequisite for recruitment into SGs. Post-translationally, phosphorylated by CK2, GSK3A and GSK3B. Phosphorylation by GSK3B increases RNA-binding activity to the TXN 3'-UTR transcript upon exposure to UV radiation. As to expression, ubiquitous.

Its subcellular location is the nucleus. It localises to the nucleoplasm. The protein resides in the cytoplasm. Functionally, cold-inducible mRNA binding protein that plays a protective role in the genotoxic stress response by stabilizing transcripts of genes involved in cell survival. Promotes assembly of stress granules (SGs), when overexpressed. Seems to play an essential role in cold-induced suppression of cell proliferation. Acts as a translational repressor. Acts as a translational activator. Binds specifically to the 3'-untranslated regions (3'-UTRs) of stress-responsive transcripts RPA2 and TXN. In Mus musculus (Mouse), this protein is Cold-inducible RNA-binding protein (Cirbp).